A 380-amino-acid chain; its full sequence is MAPNLRKSHPLLKIINNSLIDLPTPSNISAWWNFGSLLGICLLTQILTGLLLATHYTADTTLAFSSVAHTCRNVQYGWLIRNLHANGASFFFICIYLHIGRGFYYGSYLNKETWNTGVILLLTLMATAFVGYVLPWGQMSFWGATVITNLFSAIPYIGQTLVEWAWGGFSVDNPTLTRFFALHFLLPFMIAGLALIHLTFLHESGSNNPLGILSNCDKIPFHPYFSLKDILGFIIMFLPLTTLALFSPNLLGDPENFTPANPLITPPHIKPEWYFLFAYAILRSIPNKLGGVLALAASVLVLFLTPLLHKSKQRAMTFRPLSQLLFWTLVTNLCILTWVGSQPVEHPFIIIGQLASLTYFTILLLLFPIIGALENKMLNY.

A run of 4 helical transmembrane segments spans residues phenylalanine 34–threonine 54, tryptophan 78–isoleucine 99, tryptophan 114–leucine 134, and phenylalanine 179–threonine 199. Heme b is bound by residues histidine 84 and histidine 98. Heme b is bound by residues histidine 183 and histidine 197. Histidine 202 provides a ligand contact to a ubiquinone. 4 helical membrane-spanning segments follow: residues leucine 227–serine 247, leucine 289–histidine 309, leucine 321–serine 341, and phenylalanine 348–proline 368.

The protein belongs to the cytochrome b family. In terms of assembly, the cytochrome bc1 complex contains 11 subunits: 3 respiratory subunits (MT-CYB, CYC1 and UQCRFS1), 2 core proteins (UQCRC1 and UQCRC2) and 6 low-molecular weight proteins (UQCRH/QCR6, UQCRB/QCR7, UQCRQ/QCR8, UQCR10/QCR9, UQCR11/QCR10 and a cleavage product of UQCRFS1). This cytochrome bc1 complex then forms a dimer. Heme b serves as cofactor.

Its subcellular location is the mitochondrion inner membrane. Its function is as follows. Component of the ubiquinol-cytochrome c reductase complex (complex III or cytochrome b-c1 complex) that is part of the mitochondrial respiratory chain. The b-c1 complex mediates electron transfer from ubiquinol to cytochrome c. Contributes to the generation of a proton gradient across the mitochondrial membrane that is then used for ATP synthesis. The protein is Cytochrome b (MT-CYB) of Cepphus grylle (Black guillemot).